The chain runs to 419 residues: L-rhamnose isomerase (419 aa).

Residues His-262, Asp-294, and Asp-296 each contribute to the Mn(2+) site.

This sequence belongs to the rhamnose isomerase family. As to quaternary structure, homotetramer. The cofactor is Mn(2+).

The protein resides in the cytoplasm. The catalysed reaction is L-rhamnopyranose = L-rhamnulose. It participates in carbohydrate degradation; L-rhamnose degradation; glycerone phosphate from L-rhamnose: step 1/3. In terms of biological role, catalyzes the interconversion of L-rhamnose and L-rhamnulose. The sequence is that of L-rhamnose isomerase from Shigella flexneri serotype 5b (strain 8401).